We begin with the raw amino-acid sequence, 517 residues long: General transcription factor IIF subunit 1 (517 aa).

A2 is modified (N-acetylalanine). Residue T156 is modified to Phosphothreonine. The segment at 178 to 466 (QQRRLKDQDQ…DAVRRYLTRK (289 aa)) is disordered. Phosphoserine is present on residues S217, S218, S221, and S224. Residues 232-251 (PKAKKKAPLAKGGRKKKKKK) are compositionally biased toward basic residues. Composition is skewed to acidic residues over residues 255–270 (DEAF…EGQE) and 303–325 (EQSD…EEEE). T331 is modified (phosphothreonine). The segment covering 343–355 (EESDSSEESDIDS) has biased composition (acidic residues). Over residues 364–374 (AKKKTPPKRER) the composition is skewed to basic residues. S377, S380, S381, and S385 each carry phosphoserine. The span at 377 to 391 (SGGSSRGNSRPGTPS) shows a compositional bias: low complexity. A Phosphothreonine modification is found at T389. S391 is modified (phosphoserine). Position 407 is an N6-acetyllysine (K407). Positions 428 to 452 (GPQSLSGKSTPQPPSGKTTPNSGDV) are enriched in polar residues. S431, S433, and S436 each carry phosphoserine. 2 positions are modified to phosphothreonine: T437 and T446. S449 is modified (phosphoserine). Positions 503, 512, and 517 each coordinate Zn(2+).

The protein belongs to the TFIIF alpha subunit family. In terms of assembly, heterodimer of an alpha and a beta subunit. Interacts with GTF2F2, CTDP1, TAF6/TAFII80 and URI1. Interacts with GTF2B (via C-terminus and preferentially via acetylated form); this interaction prevents binding of GTF2B to GTF2F2. Part of TBP-based Pol II pre-initiation complex (PIC), in which Pol II core assembles with general transcription factors and other specific initiation factors including GTF2E1, GTF2E2, GTF2F1, GTF2F2, TCEA1, ERCC2, ERCC3, GTF2H2, GTF2H3, GTF2H4, GTF2H5, GTF2A1, GTF2A2, GTF2B and TBP; this large multi-subunit PIC complex mediates DNA unwinding and targets Pol II core to the transcription start site where the first phosphodiester bond forms. Phosphorylated on Ser and other residues by TAF1 and casein kinase II-like kinases.

Its subcellular location is the nucleus. In terms of biological role, TFIIF is a general transcription initiation factor that binds to RNA polymerase II and helps to recruit it to the initiation complex in collaboration with TFIIB. It promotes transcription elongation. The chain is General transcription factor IIF subunit 1 (GTF2F1) from Homo sapiens (Human).